Here is a 59-residue protein sequence, read N- to C-terminus: Large ribosomal subunit protein bL32 (59 aa).

The interval 1–59 (MAVQQNKKSPSKRGMHRSHDALTAPALFVDSTTGEVHRPHHISPNGMYRGRKVVKAKGE) is disordered. Over residues 49-59 (RGRKVVKAKGE) the composition is skewed to basic residues.

This sequence belongs to the bacterial ribosomal protein bL32 family.

The sequence is that of Large ribosomal subunit protein bL32 from Neisseria gonorrhoeae (strain ATCC 700825 / FA 1090).